A 412-amino-acid chain; its full sequence is uncharacterized protein (412 aa).

Residues 1–17 (MPSQGNNKNSENITQNP) are compositionally biased toward polar residues. 3 disordered regions span residues 1 to 20 (MPSQ…PIEG), 223 to 243 (EQAV…ARQT), and 310 to 412 (QKQM…NPVA). Over residues 340–355 (KLNSNTRGSSKRPSVN) the composition is skewed to polar residues. The span at 361-379 (GQRGRGGRGFYRGGRGRGG) shows a compositional bias: gly residues. A compositionally biased stretch (low complexity) spans 390–402 (SNSNNSTSQPSPN). Over residues 403-412 (AELSNFNPVA) the composition is skewed to polar residues.

This is an uncharacterized protein from Schizosaccharomyces pombe (strain 972 / ATCC 24843) (Fission yeast).